A 295-amino-acid polypeptide reads, in one-letter code: Proline-rich proteoglycan 2 (295 aa).

The N-terminal stretch at 1–16 is a signal peptide; it reads MLVVLLTAALLVLSSA. Residues 16–295 form a disordered region; that stretch reads AQGVDEEVVY…QSSFLWSFSA (280 aa). The segment covering 26 to 41 has biased composition (low complexity); sequence EDSSQQLELEQQSQGH. The span at 48 to 58 shows a compositional bias: pro residues; it reads PPPGGLPPRPP. Positions 62 to 78 are enriched in acidic residues; the sequence is ENGDGDDNDDGDDDGSG. Pro residues-rich tracts occupy residues 100-187 and 194-278; these read PPPA…PPGG and QGPP…PQGP.

Post-translationally, contains glycosaminoglycans of chondroitin-sulfate and heparan types.

The protein resides in the secreted. The chain is Proline-rich proteoglycan 2 (Prpg2) from Rattus norvegicus (Rat).